Consider the following 828-residue polypeptide: Glycerol-3-phosphate acyltransferase (828 aa).

Residues 310 to 315 carry the HXXXXD motif motif; it reads HRSHID.

It belongs to the GPAT/DAPAT family.

The protein resides in the cell inner membrane. It carries out the reaction sn-glycerol 3-phosphate + an acyl-CoA = a 1-acyl-sn-glycero-3-phosphate + CoA. Its pathway is phospholipid metabolism; CDP-diacylglycerol biosynthesis; CDP-diacylglycerol from sn-glycerol 3-phosphate: step 1/3. The sequence is that of Glycerol-3-phosphate acyltransferase from Pseudomonas putida (strain ATCC 47054 / DSM 6125 / CFBP 8728 / NCIMB 11950 / KT2440).